A 523-amino-acid polypeptide reads, in one-letter code: Chitinase Chi52 (523 aa).

Positions 1 to 30 (MNQAVRFRPVITFALAFLLLITWFAPRADA) are cleaved as a signal peptide. The segment at 80 to 101 (GSGGETPTPDTAPPSVPAGLTS) is disordered. Residues 95–180 (VPAGLTSSSI…TSLSVTTSNG (86 aa)) enclose the Fibronectin type-III domain. One can recognise a GH18 domain in the interval 190–513 (KWLIGYWHNF…SAHRPFLNGL (324 aa)). Catalysis depends on E302, which acts as the Proton donor.

This sequence belongs to the glycosyl hydrolase 18 family. Chitinase class II subfamily.

It carries out the reaction Random endo-hydrolysis of N-acetyl-beta-D-glucosaminide (1-&gt;4)-beta-linkages in chitin and chitodextrins.. With respect to regulation, activity is inhibited by Cu(2+) and Co(2+), and almost completely inhibited by SDS. Acidic chitinase that displays a broad substrate specificity, showing the highest specific activity toward colloidal chitin, followed by ethylene glycol chitin and ball milled chitin, but exhibits no activity toward powdery chitin and chitosan. Hydrolyzes colloidal chitin and chitooligosaccharides with degree of polymerization 2-5 to release mainly N-acetyl chitobiose. Displays inhibition effects on the growth of some phytopathogenic fungi, including Alternaria alstroemeriae, Botrytis cinerea, Rhizoctonia solani, Sclerotinia sclerotiorum and Valsa mali. The sequence is that of Chitinase Chi52 from Paenibacillus xylanexedens.